We begin with the raw amino-acid sequence, 697 residues long: Probable glutamine--tRNA ligase (697 aa).

Positions 204–214 match the 'HIGH' region motif; sequence PEPNGILHIGH. Residues 205–207 and 211–217 contribute to the ATP site; these read EPN and HIGHAKA. Residues aspartate 237 and tyrosine 386 each coordinate L-glutamine. Residues threonine 405, 434-435, and 442-444 contribute to the ATP site; these read RL and LSK. Positions 441 to 445 match the 'KMSKS' region motif; that stretch reads VLSKR.

Belongs to the class-I aminoacyl-tRNA synthetase family.

The catalysed reaction is tRNA(Gln) + L-glutamine + ATP = L-glutaminyl-tRNA(Gln) + AMP + diphosphate. In Encephalitozoon cuniculi (strain GB-M1) (Microsporidian parasite), this protein is Probable glutamine--tRNA ligase.